Reading from the N-terminus, the 133-residue chain is Putative esterase TV1331 (133 aa).

This sequence belongs to the thioesterase PaaI family.

This chain is Putative esterase TV1331, found in Thermoplasma volcanium (strain ATCC 51530 / DSM 4299 / JCM 9571 / NBRC 15438 / GSS1).